Reading from the N-terminus, the 153-residue chain is Fucose mutarotase (153 aa).

The active-site Proton donor is the His-24. Asp-32 serves as a coordination point for substrate. Asp-69 is an active-site residue. Substrate contacts are provided by Met-78, Tyr-119, Tyr-137, and Asn-139. Tyr-119 is a catalytic residue.

The protein belongs to the RbsD / FucU family.

It carries out the reaction alpha-L-fucose = beta-L-fucose. Its function is as follows. Involved in the interconversion between alpha- and beta-L-fucoses. This chain is Fucose mutarotase (fuom), found in Danio rerio (Zebrafish).